A 138-amino-acid polypeptide reads, in one-letter code: Acidic phospholipase A2 CoaPLA2 (138 aa).

An N-terminal signal peptide occupies residues 1–16 (MRTLWIVAVLLLGVEG). Intrachain disulfides connect Cys-42–Cys-131, Cys-44–Cys-60, Cys-59–Cys-111, Cys-65–Cys-138, Cys-66–Cys-104, Cys-73–Cys-97, and Cys-91–Cys-102. Ca(2+)-binding residues include Tyr-43, Gly-45, and Gly-47. The active site involves His-63. Asp-64 provides a ligand contact to Ca(2+). The active site involves Asp-105.

The protein belongs to the phospholipase A2 family. Group II subfamily. D49 sub-subfamily. Homodimer. The cofactor is Ca(2+). In terms of tissue distribution, expressed by the venom gland.

Its subcellular location is the secreted. It catalyses the reaction a 1,2-diacyl-sn-glycero-3-phosphocholine + H2O = a 1-acyl-sn-glycero-3-phosphocholine + a fatty acid + H(+). In terms of biological role, snake venom phospholipase A2 (PLA2) that shows very low inhibition of ADP-induced platelet aggregation in platelet-rich plasma of human, rabbit and guinea pig. Shows edema-inducing activity and myotoxicity. PLA2 catalyzes the calcium-dependent hydrolysis of the 2-acyl groups in 3-sn-phosphoglycerides. This chain is Acidic phospholipase A2 CoaPLA2, found in Crotalus lutosus abyssus (Grand Canyon rattlesnake).